A 743-amino-acid polypeptide reads, in one-letter code: Phosphoribosylformylglycinamidine synthase subunit PurL (743 aa).

The active site involves His-50. ATP is bound by residues Tyr-53 and Lys-92. Glu-94 contacts Mg(2+). Substrate-binding positions include 95-98 and Arg-117; that span reads SHNH. The active-site Proton acceptor is His-96. Position 118 (Asp-118) interacts with Mg(2+). A substrate-binding site is contributed by Gln-241. A Mg(2+)-binding site is contributed by Asp-269. 313–315 provides a ligand contact to substrate; it reads ESQ. ATP is bound by residues Asp-494 and Gly-531. Residue Asn-532 coordinates Mg(2+). Residue Ser-534 coordinates substrate.

It belongs to the FGAMS family. As to quaternary structure, monomer. Part of the FGAM synthase complex composed of 1 PurL, 1 PurQ and 2 PurS subunits.

It is found in the cytoplasm. The enzyme catalyses N(2)-formyl-N(1)-(5-phospho-beta-D-ribosyl)glycinamide + L-glutamine + ATP + H2O = 2-formamido-N(1)-(5-O-phospho-beta-D-ribosyl)acetamidine + L-glutamate + ADP + phosphate + H(+). It functions in the pathway purine metabolism; IMP biosynthesis via de novo pathway; 5-amino-1-(5-phospho-D-ribosyl)imidazole from N(2)-formyl-N(1)-(5-phospho-D-ribosyl)glycinamide: step 1/2. Functionally, part of the phosphoribosylformylglycinamidine synthase complex involved in the purines biosynthetic pathway. Catalyzes the ATP-dependent conversion of formylglycinamide ribonucleotide (FGAR) and glutamine to yield formylglycinamidine ribonucleotide (FGAM) and glutamate. The FGAM synthase complex is composed of three subunits. PurQ produces an ammonia molecule by converting glutamine to glutamate. PurL transfers the ammonia molecule to FGAR to form FGAM in an ATP-dependent manner. PurS interacts with PurQ and PurL and is thought to assist in the transfer of the ammonia molecule from PurQ to PurL. This chain is Phosphoribosylformylglycinamidine synthase subunit PurL, found in Rhizobium meliloti (strain 1021) (Ensifer meliloti).